The primary structure comprises 747 residues: Probable copper-transporting ATPase PacS (747 aa).

The Cytoplasmic portion of the chain corresponds to M1–S101. Residues N3–F69 enclose the HMA domain. Positions 14 and 17 each coordinate a metal cation. The chain crosses the membrane as a helical span at residues G102 to P122. Residues G123–G132 are Extracellular-facing. A helical transmembrane segment spans residues L133 to N151. At A152 to Q158 the chain is on the cytoplasmic side. Residues N159–L179 traverse the membrane as a helical segment. The Extracellular segment spans residues A180 to Y199. The helical transmembrane segment at E200 to K220 threads the bilayer. Residues G221–Q348 lie on the Cytoplasmic side of the membrane. A helical transmembrane segment spans residues V349–W371. The Extracellular portion of the chain corresponds to I372–A378. Residues L379–L396 form a helical membrane-spanning segment. Over A397 to I688 the chain is Cytoplasmic. Catalysis depends on D434, which acts as the 4-aspartylphosphate intermediate. Mg(2+) is bound by residues D634 and D638. A helical membrane pass occupies residues R689 to G708. The Extracellular segment spans residues I709–P720. Residues M721 to L739 traverse the membrane as a helical segment. The Cytoplasmic portion of the chain corresponds to R740–R747.

Belongs to the cation transport ATPase (P-type) (TC 3.A.3) family. Type IB subfamily.

Its subcellular location is the cell membrane. The catalysed reaction is Cu(+)(in) + ATP + H2O = Cu(+)(out) + ADP + phosphate + H(+). Its function is as follows. May play a role in the osmotic adaptation. In Synechococcus elongatus (strain ATCC 33912 / PCC 7942 / FACHB-805) (Anacystis nidulans R2), this protein is Probable copper-transporting ATPase PacS (pacS).